Reading from the N-terminus, the 378-residue chain is GTPase Obg (378 aa).

The Obg domain maps to 1-159; it reads MKFVDEATIE…RRLRLELKVL (159 aa). The OBG-type G domain maps to 160-336; that stretch reads ADVGLLGLPN…LIWALQDYLD (177 aa). Residues 166–173, 191–195, 213–216, 288–291, and 317–319 contribute to the GTP site; these read GLPNAGKS, FTTLH, DIPG, NKLD, and SGL. Positions 173 and 193 each coordinate Mg(2+). Residues 345–378 form a disordered region; it reads AQDQADGTYVAEDPRFDATRSDAAPPGAPRGGDE.

This sequence belongs to the TRAFAC class OBG-HflX-like GTPase superfamily. OBG GTPase family. Monomer. Mg(2+) serves as cofactor.

It localises to the cytoplasm. Its function is as follows. An essential GTPase which binds GTP, GDP and possibly (p)ppGpp with moderate affinity, with high nucleotide exchange rates and a fairly low GTP hydrolysis rate. Plays a role in control of the cell cycle, stress response, ribosome biogenesis and in those bacteria that undergo differentiation, in morphogenesis control. This is GTPase Obg from Bordetella petrii (strain ATCC BAA-461 / DSM 12804 / CCUG 43448).